The following is a 424-amino-acid chain: Glutamate-1-semialdehyde 2,1-aminomutase (424 aa).

At Lys264 the chain carries N6-(pyridoxal phosphate)lysine.

This sequence belongs to the class-III pyridoxal-phosphate-dependent aminotransferase family. HemL subfamily. As to quaternary structure, homodimer. Pyridoxal 5'-phosphate is required as a cofactor.

The protein resides in the cytoplasm. The enzyme catalyses (S)-4-amino-5-oxopentanoate = 5-aminolevulinate. Its pathway is porphyrin-containing compound metabolism; protoporphyrin-IX biosynthesis; 5-aminolevulinate from L-glutamyl-tRNA(Glu): step 2/2. In Aquifex aeolicus (strain VF5), this protein is Glutamate-1-semialdehyde 2,1-aminomutase (hemL).